Reading from the N-terminus, the 40-residue chain is Large ribosomal subunit protein bL36B (40 aa).

The protein belongs to the bacterial ribosomal protein bL36 family.

The chain is Large ribosomal subunit protein bL36B from Streptomyces coelicolor (strain ATCC BAA-471 / A3(2) / M145).